The sequence spans 803 residues: Leucine--tRNA ligase (803 aa).

The 'HIGH' region signature appears at 40–51 (PYPSGAGLHVGH). A 'KMSKS' region motif is present at residues 575–579 (KMSKS). An ATP-binding site is contributed by Lys578.

The protein belongs to the class-I aminoacyl-tRNA synthetase family.

The protein localises to the cytoplasm. It catalyses the reaction tRNA(Leu) + L-leucine + ATP = L-leucyl-tRNA(Leu) + AMP + diphosphate. This Listeria monocytogenes serotype 4a (strain HCC23) protein is Leucine--tRNA ligase.